Here is a 172-residue protein sequence, read N- to C-terminus: Endoribonuclease YbeY (172 aa).

Residues histidine 137, histidine 141, and histidine 147 each coordinate Zn(2+).

Belongs to the endoribonuclease YbeY family. Zn(2+) serves as cofactor.

The protein resides in the cytoplasm. In terms of biological role, single strand-specific metallo-endoribonuclease involved in late-stage 70S ribosome quality control and in maturation of the 3' terminus of the 16S rRNA. This Dehalococcoides mccartyi (strain ATCC BAA-2266 / KCTC 15142 / 195) (Dehalococcoides ethenogenes (strain 195)) protein is Endoribonuclease YbeY.